The primary structure comprises 394 residues: Chalcone synthase (394 aa).

Cys-168 is a catalytic residue.

This sequence belongs to the thiolase-like superfamily. Chalcone/stilbene synthases family.

The enzyme catalyses (E)-4-coumaroyl-CoA + 3 malonyl-CoA + 3 H(+) = 2',4,4',6'-tetrahydroxychalcone + 3 CO2 + 4 CoA. The protein operates within secondary metabolite biosynthesis; flavonoid biosynthesis. The primary product of this enzyme is 4,2',4',6'-tetrahydroxychalcone (also termed naringenin-chalcone or chalcone) which can under specific conditions spontaneously isomerize into naringenin. The protein is Chalcone synthase (CHS) of Raphanus sativus (Radish).